Here is a 764-residue protein sequence, read N- to C-terminus: 5-methyltetrahydropteroyltriglutamate--homocysteine methyltransferase (764 aa).

Residues 19 to 22 (RELK) and Lys113 each bind 5-methyltetrahydropteroyltri-L-glutamate. Residues 435–437 (IGS) and Glu488 each bind L-homocysteine. Residues 435 to 437 (IGS) and Glu488 contribute to the L-methionine site. 5-methyltetrahydropteroyltri-L-glutamate contacts are provided by residues 519–520 (RC) and Trp565. Asp603 serves as a coordination point for L-homocysteine. Asp603 is an L-methionine binding site. Glu609 is a 5-methyltetrahydropteroyltri-L-glutamate binding site. Zn(2+) is bound by residues His645, Cys647, and Glu669. His698 (proton donor) is an active-site residue. Cys730 contributes to the Zn(2+) binding site.

It belongs to the vitamin-B12 independent methionine synthase family. Zn(2+) serves as cofactor.

It carries out the reaction 5-methyltetrahydropteroyltri-L-glutamate + L-homocysteine = tetrahydropteroyltri-L-glutamate + L-methionine. It participates in amino-acid biosynthesis; L-methionine biosynthesis via de novo pathway; L-methionine from L-homocysteine (MetE route): step 1/1. Functionally, catalyzes the transfer of a methyl group from 5-methyltetrahydrofolate to homocysteine resulting in methionine formation. The sequence is that of 5-methyltetrahydropteroyltriglutamate--homocysteine methyltransferase from Desulforamulus reducens (strain ATCC BAA-1160 / DSM 100696 / MI-1) (Desulfotomaculum reducens).